The sequence spans 257 residues: Uroporphyrinogen-III C-methyltransferase (257 aa).

S-adenosyl-L-homocysteine is bound by residues Pro-11, 87–89 (GGD), 117–118 (TS), and Met-170.

This sequence belongs to the precorrin methyltransferase family.

The catalysed reaction is uroporphyrinogen III + 2 S-adenosyl-L-methionine = precorrin-2 + 2 S-adenosyl-L-homocysteine + H(+). Its pathway is cofactor biosynthesis; adenosylcobalamin biosynthesis; precorrin-2 from uroporphyrinogen III: step 1/1. The protein operates within porphyrin-containing compound metabolism; siroheme biosynthesis; precorrin-2 from uroporphyrinogen III: step 1/1. Catalyzes the two successive C-2 and C-7 methylation reactions involved in the conversion of uroporphyrinogen III to precorrin-2 via the intermediate formation of precorrin-1. It is a step in the biosynthesis of both cobalamin (vitamin B12) and siroheme. This chain is Uroporphyrinogen-III C-methyltransferase (sumT), found in Bacillus subtilis (strain 168).